We begin with the raw amino-acid sequence, 283 residues long: Bifunctional protein FolD (283 aa).

Residues 166–168 and Ile232 contribute to the NADP(+) site; that span reads GAS.

It belongs to the tetrahydrofolate dehydrogenase/cyclohydrolase family. Homodimer.

It carries out the reaction (6R)-5,10-methylene-5,6,7,8-tetrahydrofolate + NADP(+) = (6R)-5,10-methenyltetrahydrofolate + NADPH. The catalysed reaction is (6R)-5,10-methenyltetrahydrofolate + H2O = (6R)-10-formyltetrahydrofolate + H(+). It participates in one-carbon metabolism; tetrahydrofolate interconversion. Functionally, catalyzes the oxidation of 5,10-methylenetetrahydrofolate to 5,10-methenyltetrahydrofolate and then the hydrolysis of 5,10-methenyltetrahydrofolate to 10-formyltetrahydrofolate. The protein is Bifunctional protein FolD of Hamiltonella defensa subsp. Acyrthosiphon pisum (strain 5AT).